The following is a 225-amino-acid chain: NAD(P)H-quinone oxidoreductase subunit K, chloroplastic (225 aa).

[4Fe-4S] cluster-binding residues include cysteine 43, cysteine 44, cysteine 108, and cysteine 139.

Belongs to the complex I 20 kDa subunit family. As to quaternary structure, NDH is composed of at least 16 different subunits, 5 of which are encoded in the nucleus. Requires [4Fe-4S] cluster as cofactor.

The protein resides in the plastid. It localises to the chloroplast thylakoid membrane. The catalysed reaction is a plastoquinone + NADH + (n+1) H(+)(in) = a plastoquinol + NAD(+) + n H(+)(out). It carries out the reaction a plastoquinone + NADPH + (n+1) H(+)(in) = a plastoquinol + NADP(+) + n H(+)(out). Its function is as follows. NDH shuttles electrons from NAD(P)H:plastoquinone, via FMN and iron-sulfur (Fe-S) centers, to quinones in the photosynthetic chain and possibly in a chloroplast respiratory chain. The immediate electron acceptor for the enzyme in this species is believed to be plastoquinone. Couples the redox reaction to proton translocation, and thus conserves the redox energy in a proton gradient. The chain is NAD(P)H-quinone oxidoreductase subunit K, chloroplastic from Illicium oligandrum (Star anise).